We begin with the raw amino-acid sequence, 182 residues long: Protein Syd (182 aa).

This sequence belongs to the Syd family.

Its subcellular location is the cell inner membrane. Functionally, interacts with the SecY protein in vivo. May bind preferentially to an uncomplexed state of SecY, thus functioning either as a chelating agent for excess SecY in the cell or as a regulatory factor that negatively controls the translocase function. The polypeptide is Protein Syd (Aeromonas hydrophila subsp. hydrophila (strain ATCC 7966 / DSM 30187 / BCRC 13018 / CCUG 14551 / JCM 1027 / KCTC 2358 / NCIMB 9240 / NCTC 8049)).